We begin with the raw amino-acid sequence, 349 residues long: Isopentenyl-diphosphate delta-isomerase (349 aa).

8–9 contributes to the substrate binding site; that stretch reads RK. Residues S66, 67 to 69, S97, and N125 contribute to the FMN site; that span reads SMT. A substrate-binding site is contributed by 97 to 99; sequence STR. Q160 provides a ligand contact to substrate. E161 is a binding site for Mg(2+). Residues K192, T222, 272-274, and 293-294 each bind FMN; these read GMK and AR.

This sequence belongs to the IPP isomerase type 2 family. As to quaternary structure, homooctamer. Dimer of tetramers. FMN is required as a cofactor. NADPH serves as cofactor. Requires Mg(2+) as cofactor.

The protein localises to the cytoplasm. The catalysed reaction is isopentenyl diphosphate = dimethylallyl diphosphate. Its function is as follows. Involved in the biosynthesis of isoprenoids. Catalyzes the 1,3-allylic rearrangement of the homoallylic substrate isopentenyl (IPP) to its allylic isomer, dimethylallyl diphosphate (DMAPP). The polypeptide is Isopentenyl-diphosphate delta-isomerase (Oceanobacillus iheyensis (strain DSM 14371 / CIP 107618 / JCM 11309 / KCTC 3954 / HTE831)).